Consider the following 296-residue polypeptide: tRNA uridine(34) hydroxylase (296 aa).

The region spanning 130-225 (RGEDVVFFDG…YGEAYGDRGL (96 aa)) is the Rhodanese domain. Cysteine 185 acts as the Cysteine persulfide intermediate in catalysis.

Belongs to the TrhO family.

It catalyses the reaction uridine(34) in tRNA + AH2 + O2 = 5-hydroxyuridine(34) in tRNA + A + H2O. Functionally, catalyzes oxygen-dependent 5-hydroxyuridine (ho5U) modification at position 34 in tRNAs. The polypeptide is tRNA uridine(34) hydroxylase (Kocuria rhizophila (strain ATCC 9341 / DSM 348 / NBRC 103217 / DC2201)).